Reading from the N-terminus, the 341-residue chain is tRNA (guanine-N(7)-)-methyltransferase (341 aa).

Glutamate 75, glutamate 100, aspartate 127, and aspartate 150 together coordinate S-adenosyl-L-methionine. Aspartate 150 is a catalytic residue. A substrate-binding site is contributed by lysine 154. Residues arginine 156–arginine 161 are interaction with RNA. Aspartate 186 provides a ligand contact to substrate.

It belongs to the class I-like SAM-binding methyltransferase superfamily. TrmB family.

It catalyses the reaction guanosine(46) in tRNA + S-adenosyl-L-methionine = N(7)-methylguanosine(46) in tRNA + S-adenosyl-L-homocysteine. It participates in tRNA modification; N(7)-methylguanine-tRNA biosynthesis. Catalyzes the formation of N(7)-methylguanine at position 46 (m7G46) in tRNA. The chain is tRNA (guanine-N(7)-)-methyltransferase from Xanthomonas euvesicatoria pv. vesicatoria (strain 85-10) (Xanthomonas campestris pv. vesicatoria).